Consider the following 331-residue polypeptide: MGIVDQPQSKGQESTPGDFAAVQKSIIDLLNQPDYDDGSAGPVLVRLAWHSSGTYDKVTDTGGSNGAGMRYEAEGGDPANAGLQNARVFLEPVKRLHPWITYSDLWTLAGVTAIHAMGGPEIDWLPGRTDFVDDSKLPPRGRLPDAAQGAEHIRHIFYRMGFNDREIVALSGAHNLGRCHTANSGFEGKWVNNPTRFSNQYFRLLLSETWTEKTIPESGLLQFSSVDQDTEEELMMLPTDIALTTDSEFSKYVQLYAKDKDVFFQDFKKAFAKLLELGIARNSEGKVINTDNQKGGYRSAPKKSDSTPATSGQPGASKTGGCPVMHHKAKL.

The Proton acceptor role is filled by histidine 50. A heme b-binding site is contributed by histidine 174. Catalysis depends on tryptophan 190, which acts as the Tryptophan radical intermediate. The interval 288 to 331 (INTDNQKGGYRSAPKKSDSTPATSGQPGASKTGGCPVMHHKAKL) is disordered. Polar residues predominate over residues 306–316 (STPATSGQPGA).

The protein belongs to the peroxidase family. Cytochrome c peroxidase subfamily. Requires heme b as cofactor.

Functionally, destroys radicals which are normally produced within the cells and which are toxic to biological systems. The chain is Putative heme-binding peroxidase from Gibberella zeae (strain ATCC MYA-4620 / CBS 123657 / FGSC 9075 / NRRL 31084 / PH-1) (Wheat head blight fungus).